We begin with the raw amino-acid sequence, 339 residues long: Glycerol-3-phosphate dehydrogenase [NAD(P)+] (339 aa).

Residues S15, Y16, H36, and K110 each contribute to the NADPH site. Sn-glycerol 3-phosphate contacts are provided by K110, G139, and T141. A143 is an NADPH binding site. Residues K195, D248, S258, R259, and N260 each contribute to the sn-glycerol 3-phosphate site. The Proton acceptor role is filled by K195. R259 contributes to the NADPH binding site. NADPH is bound by residues V283 and E285.

This sequence belongs to the NAD-dependent glycerol-3-phosphate dehydrogenase family.

The protein localises to the cytoplasm. It carries out the reaction sn-glycerol 3-phosphate + NAD(+) = dihydroxyacetone phosphate + NADH + H(+). It catalyses the reaction sn-glycerol 3-phosphate + NADP(+) = dihydroxyacetone phosphate + NADPH + H(+). It participates in membrane lipid metabolism; glycerophospholipid metabolism. In terms of biological role, catalyzes the reduction of the glycolytic intermediate dihydroxyacetone phosphate (DHAP) to sn-glycerol 3-phosphate (G3P), the key precursor for phospholipid synthesis. The sequence is that of Glycerol-3-phosphate dehydrogenase [NAD(P)+] from Shigella flexneri serotype 5b (strain 8401).